The sequence spans 299 residues: Polyamine aminopropyltransferase (299 aa).

The PABS domain occupies 6–252 (IVLLFALLCT…SLPNQQALQQ (247 aa)). Residues Gln-36, Glu-120, and 147–148 (DA) contribute to the S-methyl-5'-thioadenosine site. Asp-168 acts as the Proton acceptor in catalysis.

It belongs to the spermidine/spermine synthase family. Homodimer or homotetramer.

The protein resides in the cytoplasm. It catalyses the reaction S-adenosyl 3-(methylsulfanyl)propylamine + putrescine = S-methyl-5'-thioadenosine + spermidine + H(+). Its pathway is amine and polyamine biosynthesis; spermidine biosynthesis; spermidine from putrescine: step 1/1. Its function is as follows. Catalyzes the irreversible transfer of a propylamine group from the amino donor S-adenosylmethioninamine (decarboxy-AdoMet) to putrescine (1,4-diaminobutane) to yield spermidine. The chain is Polyamine aminopropyltransferase from Vibrio vulnificus (strain CMCP6).